Here is a 649-residue protein sequence, read N- to C-terminus: Leucine-rich repeat transmembrane protein FLRT3 (649 aa).

Positions 1 to 28 (MISPAWSLFLIGTKIGLFFQVAPLSVMA) are cleaved as a signal peptide. One can recognise an LRRNT domain in the interval 29–58 (KSCPSVCRCDAGFIYCNDRSLTSIPVGIPE). Residues 29–528 (KSCPSVCRCD…KEPYKNPNLP (500 aa)) are Extracellular-facing. 2 disulfides stabilise this stretch: C31–C37 and C35–C44. The interaction with ADGRL3 stretch occupies residues 38 to 67 (DAGFIYCNDRSLTSIPVGIPEDATTLYLQN). LRR repeat units follow at residues 59–80 (DATT…SDLK), 84–104 (KVQR…NLPK), 105–126 (YVKE…SLSK), 129–150 (YLEE…EGAF), 155–176 (YLRL…LPRT), 177–197 (IEEL…SLHG), 200–220 (SLKR…GDKV), 226–247 (NLTE…LPGT), 248–269 (SLRK…AFSY), and 272–293 (QLYR…IFDD). An N-linked (GlcNAc...) asparagine glycan is attached at N226. N-linked (GlcNAc...) asparagine glycans are attached at residues N282 and N296. Residues 305-357 (NPWYCGCKMKWVRDWLQSLPVKVNVRGLMCQAPEKVRGMAIKDLSAELFDCKD) enclose the LRRCT domain. Cysteines 309 and 334 form a disulfide. Residues 378 to 405 (QGQWPAPVTKQPDIKNPKLTKDQRTTGS) form a disordered region. The segment covering 389–401 (PDIKNPKLTKDQR) has biased composition (basic and acidic residues). The Fibronectin type-III domain maps to 405-504 (SPSRKTILIT…VCIETQTAPL (100 aa)). A helical membrane pass occupies residues 529 to 549 (LAAIIGGAVALVSIALLALVC). Residues 550–649 (WYVHRNGSLF…GIPDLDHSHS (100 aa)) lie on the Cytoplasmic side of the membrane. The disordered stretch occupies residues 629–649 (ESSSNRSYRDSGIPDLDHSHS).

Monomer and homodimer. Self-associates (via leucine-rich repeats), giving rise to homooligomers. Interacts with FGFR1. Interacts (via extracellular domain) with ADGRL1/LPHN1 and ADGRL3 (via olfactomedin-like domain). Interacts (via extracellular domain) with LPHN2 (via olfactomedin-like domain). Interacts (via extracellular domain) with UNC5B (via Ig domain). May also interact (via extracellular domain) with UNC5A and UNC5C. Interacts (via extracellular domain) with UNC5D (via extracellular domain). Identified in complexes composed of FLRT3, ADGRL3 and UNC5B, respectively FLRT3, ADGRL3 and UNC5D. Interacts (via cytoplasmic domain) with ROBO1. Post-translationally, N-glycosylated. Proteolytic cleavage in the juxtamembrane region gives rise to a soluble ectodomain. Cleavage is probably effected by a metalloprotease. Detected in brain (at protein level). Detected in brain neurons, especially in basal ganglia, hippocampus dentate gyrus and CA3 region, cerebellum and in olfactory bulb.

The protein localises to the cell membrane. The protein resides in the presynaptic cell membrane. Its subcellular location is the synapse. It is found in the synaptosome. It localises to the postsynaptic density. The protein localises to the cell projection. The protein resides in the dendrite. Its subcellular location is the axon. It is found in the growth cone membrane. It localises to the cytoplasmic vesicle. The protein localises to the endoplasmic reticulum membrane. The protein resides in the cell junction. Its subcellular location is the focal adhesion. It is found in the secreted. Its function is as follows. Functions in cell-cell adhesion, cell migration and axon guidance, exerting an attractive or repulsive role depending on its interaction partners. Plays a role in the spatial organization of brain neurons. Plays a role in vascular development in the retina. Plays a role in cell-cell adhesion via its interaction with ADGRL3 and probably also other latrophilins that are expressed at the surface of adjacent cells. Interaction with the intracellular domain of ROBO1 mediates axon attraction towards cells expressing NTN1. Mediates axon growth cone collapse and plays a repulsive role in neuron guidance via its interaction with UNC5B, and possibly also other UNC-5 family members. Promotes neurite outgrowth (in vitro). Mediates cell-cell contacts that promote an increase both in neurite number and in neurite length. Plays a role in the regulation of the density of glutamaergic synapses. Plays a role in fibroblast growth factor-mediated signaling cascades. Required for normal morphogenesis during embryonic development, but not for normal embryonic patterning. Required for normal ventral closure, headfold fusion and definitive endoderm migration during embryonic development. Required for the formation of a normal basement membrane and the maintenance of a normal anterior visceral endoderm during embryonic development. The polypeptide is Leucine-rich repeat transmembrane protein FLRT3 (Flrt3) (Rattus norvegicus (Rat)).